Reading from the N-terminus, the 518-residue chain is Protease Do-like 4, mitochondrial (518 aa).

The N-terminal 23 residues, 1-23 (MLFRFLQTLARFCRFLLISVLGF), are a transit peptide targeting the mitochondrion. The interval 98 to 262 (ESGGSGFVIS…IPTPVIKHFL (165 aa)) is serine protease. Residues His116, Asp147, and Ser225 each act as charge relay system in the active site. Residues 278-358 (DISYQLMENS…HFVSMKKLDE (81 aa)) form the PDZ domain.

Belongs to the peptidase S1C family.

It is found in the mitochondrion membrane. Putative serine protease. The sequence is that of Protease Do-like 4, mitochondrial (DEGP4) from Arabidopsis thaliana (Mouse-ear cress).